Consider the following 460-residue polypeptide: Argininosuccinate lyase (460 aa).

Belongs to the lyase 1 family. Argininosuccinate lyase subfamily.

The protein resides in the cytoplasm. It catalyses the reaction 2-(N(omega)-L-arginino)succinate = fumarate + L-arginine. The protein operates within amino-acid biosynthesis; L-arginine biosynthesis; L-arginine from L-ornithine and carbamoyl phosphate: step 3/3. This is Argininosuccinate lyase from Solibacter usitatus (strain Ellin6076).